A 269-amino-acid chain; its full sequence is Formamidopyrimidine-DNA glycosylase (269 aa).

P2 serves as the catalytic Schiff-base intermediate with DNA. E3 serves as the catalytic Proton donor. K57 (proton donor; for beta-elimination activity) is an active-site residue. H90, R109, and R150 together coordinate DNA. Residues 235-269 form an FPG-type zinc finger; sequence NVYGRAGQPCVQCDAILKADRHGQRSTAYCPQCQR. Catalysis depends on R259, which acts as the Proton donor; for delta-elimination activity.

Belongs to the FPG family. As to quaternary structure, monomer. The cofactor is Zn(2+).

It carries out the reaction Hydrolysis of DNA containing ring-opened 7-methylguanine residues, releasing 2,6-diamino-4-hydroxy-5-(N-methyl)formamidopyrimidine.. The enzyme catalyses 2'-deoxyribonucleotide-(2'-deoxyribose 5'-phosphate)-2'-deoxyribonucleotide-DNA = a 3'-end 2'-deoxyribonucleotide-(2,3-dehydro-2,3-deoxyribose 5'-phosphate)-DNA + a 5'-end 5'-phospho-2'-deoxyribonucleoside-DNA + H(+). Its function is as follows. Involved in base excision repair of DNA damaged by oxidation or by mutagenic agents. Acts as a DNA glycosylase that recognizes and removes damaged bases. Has a preference for oxidized purines, such as 7,8-dihydro-8-oxoguanine (8-oxoG). Has AP (apurinic/apyrimidinic) lyase activity and introduces nicks in the DNA strand. Cleaves the DNA backbone by beta-delta elimination to generate a single-strand break at the site of the removed base with both 3'- and 5'-phosphates. This Alcanivorax borkumensis (strain ATCC 700651 / DSM 11573 / NCIMB 13689 / SK2) protein is Formamidopyrimidine-DNA glycosylase.